Consider the following 597-residue polypeptide: Cytosolic Fe-S cluster assembly factor nar1 (597 aa).

Residues cysteine 20, cysteine 62, cysteine 65, cysteine 68, cysteine 216, and cysteine 271 each coordinate [4Fe-4S] cluster. A disordered region spans residues 428-449 (RASRLPGGNRRLPVGRGAASGS). 2 residues coordinate [4Fe-4S] cluster: cysteine 462 and cysteine 466. The tract at residues 479–505 (REASSSVQSSTSAEVPDSSSKPTPHEQ) is disordered.

It belongs to the NARF family.

Its function is as follows. Component of the cytosolic Fe/S protein assembly machinery. Required for maturation of extramitochondrial Fe/S proteins. May play a role in the transfer of pre-assembled Fe/S clusters to target apoproteins. This chain is Cytosolic Fe-S cluster assembly factor nar1 (nar1), found in Aspergillus niger (strain ATCC MYA-4892 / CBS 513.88 / FGSC A1513).